The sequence spans 1200 residues: Metabotropic glycine receptor (1200 aa).

Positions 1–24 are cleaved as a signal peptide; the sequence is MGAMAYSLLFCLLLAHLGLGEVGA. A disordered region spans residues 25–62; it reads SLDPPGRPDSPRERTPRGKQHGQQLPRASAPDPSIPWS. Topologically, residues 25–417 are extracellular; it reads SLDPPGRPDS…CFVQEDKYLR (393 aa). The tract at residues 85–281 is cache-like region; that stretch reads YLYTGDFHQL…CENGSYKPGW (197 aa). Residues Asn98 and Asn143 are each glycosylated (N-linked (GlcNAc...) asparagine). A disulfide bridge connects residues Cys99 and Cys272. Ser172 and Arg173 together coordinate glycine. Asn215 carries N-linked (GlcNAc...) asparagine glycosylation. Positions 234-253 are disordered; that stretch reads LHRRGSNQGPRGLGHSWRRR. Glu271 lines the glycine pocket. Asn274 is a glycosylation site (N-linked (GlcNAc...) asparagine). Glycine is bound at residue Asp307. Residue Asn333 is glycosylated (N-linked (GlcNAc...) asparagine). A helical transmembrane segment spans residues 418 to 439; that stretch reads LAIISFQALCMLLDFVSMLVVY. Residues 440–451 are Cytoplasmic-facing; sequence HFRKAKSIRASG. The helical transmembrane segment at 452–474 threads the bilayer; sequence LILLETILFGSLLLYFPVVILYF. The Extracellular portion of the chain corresponds to 475 to 478; sequence EPST. The helical transmembrane segment at 479-501 threads the bilayer; that stretch reads FRCILLRWARLLGFATVYGTVTL. Cysteines 481 and 573 form a disulfide. Residues 502–525 lie on the Cytoplasmic side of the membrane; that stretch reads KLHRVLKVFLSRTAQRIPYMTGGR. The helical transmembrane segment at 526 to 547 threads the bilayer; the sequence is VMRMLAVIVLVVFWFLVGWTSS. The Extracellular segment spans residues 548 to 576; the sequence is MCQNLERDILLVGQGQTSDHLTFNMCLID. Residues 577–597 traverse the membrane as a helical segment; the sequence is RWDYMTAVAEFLFLLWGIYLC. The Cytoplasmic segment spans residues 598-611; it reads YAVRTVPSAFHEPR. Residues 612–633 form a helical membrane-spanning segment; that stretch reads YMAVAVHNELIITAIFHTIRFV. Over 634–642 the chain is Extracellular; that stretch reads LASRLQPDW. A helical transmembrane segment spans residues 643–664; the sequence is MLMLYFAHAHLTVTVTIGLLLI. Over 665–1200 the chain is Cytoplasmic; it reads PKFSHSSNNP…SANKIPGPQK (536 aa). Ser694, Ser705, and Ser708 each carry phosphoserine. The tract at residues 757-875 is disordered; the sequence is RITEIPETVS…EAESTESVPL (119 aa). Composition is skewed to basic and acidic residues over residues 769-781 and 819-828; these read CSKE…DHSA and STYDHVRDQT. A Glycyl lysine isopeptide (Lys-Gly) (interchain with G-Cter in ubiquitin) cross-link involves residue Lys774. The segment covering 845–856 has biased composition (low complexity); the sequence is ENSTLESLSSKK. 2 positions are modified to phosphoserine: Ser865 and Ser944. Residues 947-988 form a disordered region; the sequence is DNVETIPNSGHMEEPRKPQKSGIMKQQRVSLPTANPDVSSGI. Polar residues predominate over residues 973 to 988; that stretch reads QRVSLPTANPDVSSGI. The short motif at 1000–1004 is the VCPWE motif 1 element; sequence VCPWE. Residue Ser1059 is modified to Phosphoserine. The short motif at 1065-1069 is the VCPWE motif 2 element; sequence VCPWE. Ser1074 is subject to Phosphoserine. The segment at 1130 to 1160 is disordered; sequence QMGDQEKQTSSSVDIIPGSCNSSNNSHQPLT. The short motif at 1165–1169 is the VCPWE motif 3 element; the sequence is VCPWE. The disordered stretch occupies residues 1177 to 1200; it reads NAERSVTLPASSALSANKIPGPQK. Over residues 1178-1191 the composition is skewed to polar residues; it reads AERSVTLPASSALS.

It belongs to the G-protein coupled receptor 3 family. As to quaternary structure, homodimer. Associates with the RGS7-GNB5 complex, promoting its localization to the cell membrane and regulating its GTPase activator activity. Interacts (via VCPWE motifs) with GNAO1. Interacts with GPC4. Interacts with EGFLAM. In terms of tissue distribution, highly expressed in brain. Expressed in several brain regions including the cerebral cortex, hippocampus, cerebellum and caudate putamen. Only expressed in neurons, and not in microglia, oligodendrocytes or astrocytes. Expressed in the visual center of the cerebral cortex. Also expressed in the eye, including photoreceptors, ganglion cells and trabecular meshwork.

The protein localises to the cell membrane. It is found in the postsynaptic cell membrane. It localises to the presynaptic cell membrane. The protein resides in the nucleus. In terms of biological role, metabotropic receptor for glycine that controls synapse formation and function in the brain. Acts as an atypical G-protein coupled receptor that recruits and regulates the RGS7-GNB5 complex instead of activating G proteins. In absence of glycine ligand, promotes the GTPase activator activity of RGS7, increasing the GTPase activity of G protein alpha subunits, thereby driving them into their inactive GDP-bound form. Glycine-binding changes the conformation of the intracellular surface, inhibiting the GTPase activator activity of the RGS7-GNB5 complex, promoting G protein alpha subunits into their active GTP-bound form and regulating cAMP levels. Also able to bind taurine, a compound closely related to glycine, but with a two-fold lower affinity. Glycine receptor-dependent regulation of cAMP controls key ion channels, kinases and neurotrophic factors involved in neuronal excitability and synaptic transmission. Plays a pivotal role in regulating mood and cognition via its ability to regulate neuronal excitability in L2/L3 pyramidal neurons of the prefrontal cortex. Also involved in spatial learning by regulating hippocampal CA1 neuronal excitability. Acts as a synaptic organizer in the hippocampus, required for proper mossy fiber-CA3 neurocircuitry establishment, structure and function: induces presynaptic differentiation in contacting axons via its interaction with GPC4. In addition to glycine, may also act as a receptor for osteocalcin (Bglap or Bglap2) hormone: osteocalcin-binding initiates a signaling response that prevents neuronal apoptosis in the hippocampus and regulates the synthesis of neurotransmitters. The chain is Metabotropic glycine receptor from Mus musculus (Mouse).